The chain runs to 163 residues: Transcription elongation factor GreB (163 aa).

The stretch at 54-76 forms a coiled coil; the sequence is GKRRMREIDRRIRFLTKRLEAAV.

Belongs to the GreA/GreB family. GreB subfamily.

Necessary for efficient RNA polymerase transcription elongation past template-encoded arresting sites. The arresting sites in DNA have the property of trapping a certain fraction of elongating RNA polymerases that pass through, resulting in locked ternary complexes. Cleavage of the nascent transcript by cleavage factors such as GreA or GreB allows the resumption of elongation from the new 3'terminus. GreB releases sequences of up to 9 nucleotides in length. This chain is Transcription elongation factor GreB, found in Neisseria meningitidis serogroup A / serotype 4A (strain DSM 15465 / Z2491).